Consider the following 954-residue polypeptide: Valine--tRNA ligase (954 aa).

A 'HIGH' region motif is present at residues 48–58 (PNVTGSLHMGH). Residues 560–564 (KMSKS) carry the 'KMSKS' region motif. Lys563 is an ATP binding site. Residues 886-954 (INKDTELARL…RAQYLSIENL (69 aa)) are a coiled coil.

Belongs to the class-I aminoacyl-tRNA synthetase family. ValS type 1 subfamily. Monomer.

The protein localises to the cytoplasm. The enzyme catalyses tRNA(Val) + L-valine + ATP = L-valyl-tRNA(Val) + AMP + diphosphate. Catalyzes the attachment of valine to tRNA(Val). As ValRS can inadvertently accommodate and process structurally similar amino acids such as threonine, to avoid such errors, it has a 'posttransfer' editing activity that hydrolyzes mischarged Thr-tRNA(Val) in a tRNA-dependent manner. The chain is Valine--tRNA ligase from Mannheimia succiniciproducens (strain KCTC 0769BP / MBEL55E).